The sequence spans 146 residues: Hemoglobin subunit beta (146 aa).

The Globin domain occupies 2 to 146 (QWSESERTII…VVSALGKQYH (145 aa)). The heme b site is built by histidine 63 and histidine 92.

It belongs to the globin family. Heterotetramer of two alpha chains and two beta chains. Red blood cells.

Involved in oxygen transport from gills to the various peripheral tissues. The polypeptide is Hemoglobin subunit beta (hbb) (Pogonophryne scotti (Saddleback plunderfish)).